We begin with the raw amino-acid sequence, 358 residues long: tRNA(Ile)-lysidine synthase (358 aa).

Position 35–40 (35–40) interacts with ATP; the sequence is SGGPDS.

This sequence belongs to the tRNA(Ile)-lysidine synthase family.

It localises to the cytoplasm. The catalysed reaction is cytidine(34) in tRNA(Ile2) + L-lysine + ATP = lysidine(34) in tRNA(Ile2) + AMP + diphosphate + H(+). Ligates lysine onto the cytidine present at position 34 of the AUA codon-specific tRNA(Ile) that contains the anticodon CAU, in an ATP-dependent manner. Cytidine is converted to lysidine, thus changing the amino acid specificity of the tRNA from methionine to isoleucine. The protein is tRNA(Ile)-lysidine synthase of Bradyrhizobium sp. (strain BTAi1 / ATCC BAA-1182).